The following is a 324-amino-acid chain: Probable UDP-sugar transporter protein SLC35A4 (324 aa).

Residues 1 to 18 (MSVEDGGMPGLGRPRQAR) lie on the Cytoplasmic side of the membrane. The helical transmembrane segment at 19–39 (WTLMLLLSTAMYGAHAPLLAL) threads the bilayer. Residues 40 to 52 (CHVDGRVPFRPSS) lie on the Lumenal side of the membrane. A helical transmembrane segment spans residues 53–73 (AVLLTELTKLLLCAFSLLVGW). The Cytoplasmic portion of the chain corresponds to 74 to 85 (QAWPQGPPPWRQ). Residues 86 to 106 (AAPFALSALLYGANNNLVIYL) traverse the membrane as a helical segment. Over 107 to 142 (QRYMDPSTYQVLSNLKIGSTAVLYCLCLRHRLSVRQ) the chain is Lumenal. A helical transmembrane segment spans residues 143-163 (GLALLLLMAAGACYAAGGLQV). Topologically, residues 164-180 (PGNTLPSPPPAAAASPM) are cytoplasmic. A helical transmembrane segment spans residues 181–201 (PLHITPLGLLLLILYCLISGL). The Lumenal segment spans residues 202-214 (SSVYTELLMKRQR). The helical transmembrane segment at 215–235 (LPLALQNLFLYTFGVLLNLGL) threads the bilayer. Residues 236–250 (HAGGGSGPGLLEGFS) are Cytoplasmic-facing. The helical transmembrane segment at 251-271 (GWAALVVLSQALNGLLMSAVM) threads the bilayer. Topologically, residues 272–275 (KHGS) are lumenal. A helical membrane pass occupies residues 276-298 (SITRLFVVSCSLVVNAVLSAVLL). The Cytoplasmic portion of the chain corresponds to 299–324 (RLQLTAAFFLATLLIGLAMRLYYGSR).

It belongs to the nucleotide-sugar transporter family. SLC35A subfamily. In terms of assembly, found in a complex with SLC35A2 and SLC35A3.

It localises to the golgi apparatus membrane. It carries out the reaction CDP-L-ribitol(in) + CDP(out) = CDP-L-ribitol(out) + CDP(in). Its function is as follows. Mediates the transport of CDP-ribitol. Does not exhibit CMP-sialic acid, UDP-galactose and UDP-N-acetylglucosamine transport activity. This chain is Probable UDP-sugar transporter protein SLC35A4, found in Homo sapiens (Human).